The sequence spans 113 residues: Prostate and testis expressed protein 2 (113 aa).

The N-terminal stretch at 1–26 is a signal peptide; it reads MLVLFLLGTVFLLCPYWGELHDPIKA. The UPAR/Ly6 domain maps to 29–110; that stretch reads IMCYECKKYH…CDHSNYCNLP (82 aa). 4 cysteine pairs are disulfide-bonded: cysteine 31/cysteine 57, cysteine 34/cysteine 42, cysteine 49/cysteine 80, and cysteine 84/cysteine 101.

Belongs to the PATE family. Isoform 1 and isoform 2 are expressed in prostate and testis. Isoform 2 is expressed in male and female brain at equivalent levels, in particular in cerebellum, cerebral cortex, corpus callosum, occipital, parrietal and temporal lobes, and pons, but not in amygdala, cerebral peduncle, hippocampus and thalamus.

It is found in the secreted. The protein is Prostate and testis expressed protein 2 (PATE2) of Homo sapiens (Human).